Here is a 424-residue protein sequence, read N- to C-terminus: MIDIRLVRENPEKIRAALKNRCVDESILDELLELDKARREAISTSDRKKAERNKISSQIAKAKASGDEALAKELMEKAKDISVEVKELSEKAKKLDEEMRNKLLYIPNIPHESVPVGESEEDNVVVRKWGEPRQFDFDSLAHWDLGPNLGMMDFERAAKLSGSRFVILRKELARLERALINFMLDLHTREHGYEEVALPHLVKRETMQATGQLPKFEEEAYKTDPDDMFLIPTAEVPLVAQHRDEILNLNELPRKYTAYTPCYRREAGSYGKDVKGMIRVHQFDKVELVWFVHPDESYEALEKLTADAEEVLKRLGLPYRVVALCTGDLGFAAAKTYDIEVWLPSYNAYKEISSCSNVEDFQARRGNMRFRDKDNKLKYVHTLNGSGLAVGRTLVAIVENYQLPDGRIRVPEVLVPYMGTEVIG.

An L-serine-binding site is contributed by 233–235; it reads TAE. Residues 264–266 and V280 each bind ATP; that span reads RRE. E287 serves as a coordination point for L-serine. 351 to 354 contributes to the ATP binding site; the sequence is EISS. S386 is a binding site for L-serine.

Belongs to the class-II aminoacyl-tRNA synthetase family. Type-1 seryl-tRNA synthetase subfamily. Homodimer. The tRNA molecule binds across the dimer.

It localises to the cytoplasm. It carries out the reaction tRNA(Ser) + L-serine + ATP = L-seryl-tRNA(Ser) + AMP + diphosphate + H(+). The enzyme catalyses tRNA(Sec) + L-serine + ATP = L-seryl-tRNA(Sec) + AMP + diphosphate + H(+). The protein operates within aminoacyl-tRNA biosynthesis; selenocysteinyl-tRNA(Sec) biosynthesis; L-seryl-tRNA(Sec) from L-serine and tRNA(Sec): step 1/1. In terms of biological role, catalyzes the attachment of serine to tRNA(Ser). Is also able to aminoacylate tRNA(Sec) with serine, to form the misacylated tRNA L-seryl-tRNA(Sec), which will be further converted into selenocysteinyl-tRNA(Sec). This is Serine--tRNA ligase from Kosmotoga olearia (strain ATCC BAA-1733 / DSM 21960 / TBF 19.5.1).